The primary structure comprises 550 residues: Chaperonin GroEL (550 aa).

ATP-binding positions include 29–32 (TAGP), lysine 50, 86–90 (DGTTT), glycine 418, and aspartate 499.

This sequence belongs to the chaperonin (HSP60) family. In terms of assembly, forms a cylinder of 14 subunits composed of two heptameric rings stacked back-to-back. Interacts with the co-chaperonin GroES.

It is found in the cytoplasm. The catalysed reaction is ATP + H2O + a folded polypeptide = ADP + phosphate + an unfolded polypeptide.. Functionally, together with its co-chaperonin GroES, plays an essential role in assisting protein folding. The GroEL-GroES system forms a nano-cage that allows encapsulation of the non-native substrate proteins and provides a physical environment optimized to promote and accelerate protein folding. This is Chaperonin GroEL from Wolbachia sp. subsp. Brugia malayi (strain TRS).